A 629-amino-acid chain; its full sequence is tRNA uridine 5-carboxymethylaminomethyl modification enzyme MnmG (629 aa).

FAD contacts are provided by residues 13-18 (GGGHAG), Val125, and Ser180. Residue 273–287 (GPRYCPSIEDKVMRF) participates in NAD(+) binding. Gln370 provides a ligand contact to FAD.

Belongs to the MnmG family. Homodimer. Heterotetramer of two MnmE and two MnmG subunits. It depends on FAD as a cofactor.

It localises to the cytoplasm. Its function is as follows. NAD-binding protein involved in the addition of a carboxymethylaminomethyl (cmnm) group at the wobble position (U34) of certain tRNAs, forming tRNA-cmnm(5)s(2)U34. The sequence is that of tRNA uridine 5-carboxymethylaminomethyl modification enzyme MnmG from Shigella sonnei (strain Ss046).